The primary structure comprises 173 residues: Translation initiation factor IF-3 (173 aa).

It belongs to the IF-3 family. Monomer.

It localises to the cytoplasm. Its function is as follows. IF-3 binds to the 30S ribosomal subunit and shifts the equilibrium between 70S ribosomes and their 50S and 30S subunits in favor of the free subunits, thus enhancing the availability of 30S subunits on which protein synthesis initiation begins. The polypeptide is Translation initiation factor IF-3 (Aromatoleum aromaticum (strain DSM 19018 / LMG 30748 / EbN1) (Azoarcus sp. (strain EbN1))).